We begin with the raw amino-acid sequence, 211 residues long: Ribonuclease P protein component 3 (211 aa).

This sequence belongs to the eukaryotic/archaeal RNase P protein component 3 family. As to quaternary structure, consists of a catalytic RNA component and at least 4-5 protein subunits.

Its subcellular location is the cytoplasm. The catalysed reaction is Endonucleolytic cleavage of RNA, removing 5'-extranucleotides from tRNA precursor.. Its function is as follows. Part of ribonuclease P, a protein complex that generates mature tRNA molecules by cleaving their 5'-ends. This chain is Ribonuclease P protein component 3, found in Aeropyrum pernix (strain ATCC 700893 / DSM 11879 / JCM 9820 / NBRC 100138 / K1).